The primary structure comprises 130 residues: Small ribosomal subunit protein uS9 (130 aa).

This sequence belongs to the universal ribosomal protein uS9 family.

The polypeptide is Small ribosomal subunit protein uS9 (Paracidovorax citrulli (strain AAC00-1) (Acidovorax citrulli)).